Here is a 732-residue protein sequence, read N- to C-terminus: Polyribonucleotide nucleotidyltransferase (732 aa).

Mg(2+)-binding residues include aspartate 502 and aspartate 508. The KH domain maps to 569 to 628 (PRLTSIQIPVDAIGMVIGKGGETIRSITEETGAEINIDDDGTVTIACSSPEGTKAAVETI). The 75-residue stretch at 638-712 (GTIYMGKVRD…GKTKFALSIK (75 aa)) folds into the S1 motif domain.

This sequence belongs to the polyribonucleotide nucleotidyltransferase family. The cofactor is Mg(2+).

Its subcellular location is the cytoplasm. It catalyses the reaction RNA(n+1) + phosphate = RNA(n) + a ribonucleoside 5'-diphosphate. Its function is as follows. Involved in mRNA degradation. Catalyzes the phosphorolysis of single-stranded polyribonucleotides processively in the 3'- to 5'-direction. In Chlorobaculum parvum (strain DSM 263 / NCIMB 8327) (Chlorobium vibrioforme subsp. thiosulfatophilum), this protein is Polyribonucleotide nucleotidyltransferase.